We begin with the raw amino-acid sequence, 108 residues long: DNA-binding protein HBbu (108 aa).

Belongs to the bacterial histone-like protein family.

Its function is as follows. Histone-like DNA-binding protein which is capable of wrapping DNA to stabilize it, and thus to prevent its denaturation under extreme environmental conditions. This is DNA-binding protein HBbu (hbb) from Borrelia parkeri.